Consider the following 423-residue polypeptide: Transcription factor bHLH14 (423 aa).

Residues G192–H243 form a disordered region. The bHLH domain occupies P245–L294. Positions E312–S343 are disordered. The span at N318–S327 shows a compositional bias: low complexity. Polar residues predominate over residues V328–G342.

Homodimer.

It localises to the nucleus. The polypeptide is Transcription factor bHLH14 (BHLH14) (Arabidopsis thaliana (Mouse-ear cress)).